Consider the following 74-residue polypeptide: Putative Fe(2+) transport protein A (74 aa).

It belongs to the FeoA family.

Functionally, might be involved in Fe(2+) ion uptake. This chain is Putative Fe(2+) transport protein A, found in Campylobacter jejuni subsp. jejuni serotype O:2 (strain ATCC 700819 / NCTC 11168).